Reading from the N-terminus, the 352-residue chain is Molybdenum import ATP-binding protein ModC (352 aa).

Residues 1 to 229 form the ABC transporter domain; sequence MLELNFSQTL…SVMNPWLPKE (229 aa). An ATP-binding site is contributed by 31–38; that stretch reads GVSGAGKT. Residues 289-352 form the Mop domain; sequence QTSIRNVLRA…AQIKSVSITA (64 aa).

Belongs to the ABC transporter superfamily. Molybdate importer (TC 3.A.1.8) family. As to quaternary structure, the complex is composed of two ATP-binding proteins (ModC), two transmembrane proteins (ModB) and a solute-binding protein (ModA).

The protein resides in the cell inner membrane. The catalysed reaction is molybdate(out) + ATP + H2O = molybdate(in) + ADP + phosphate + H(+). Part of the ABC transporter complex ModABC involved in molybdenum import. Responsible for energy coupling to the transport system. This Shigella dysenteriae serotype 1 (strain Sd197) protein is Molybdenum import ATP-binding protein ModC.